The chain runs to 339 residues: Ketol-acid reductoisomerase (NADP(+)) (339 aa).

A KARI N-terminal Rossmann domain is found at 1 to 182; that stretch reads MRVYYDRDAD…GGGRSGIIET (182 aa). Residues 24-27, Lys-48, Ser-51, Thr-53, and 83-86 contribute to the NADP(+) site; these read YGSQ and DELQ. The active site involves His-108. Gly-134 is a binding site for NADP(+). In terms of domain architecture, KARI C-terminal knotted spans 183–328; sequence NFKEECETDL…AKLRGMMPWI (146 aa). Mg(2+) is bound by residues Asp-191, Glu-195, Glu-227, and Glu-231. Substrate is bound at residue Ser-252.

The protein belongs to the ketol-acid reductoisomerase family. Requires Mg(2+) as cofactor.

The enzyme catalyses (2R)-2,3-dihydroxy-3-methylbutanoate + NADP(+) = (2S)-2-acetolactate + NADPH + H(+). The catalysed reaction is (2R,3R)-2,3-dihydroxy-3-methylpentanoate + NADP(+) = (S)-2-ethyl-2-hydroxy-3-oxobutanoate + NADPH + H(+). Its pathway is amino-acid biosynthesis; L-isoleucine biosynthesis; L-isoleucine from 2-oxobutanoate: step 2/4. It participates in amino-acid biosynthesis; L-valine biosynthesis; L-valine from pyruvate: step 2/4. In terms of biological role, involved in the biosynthesis of branched-chain amino acids (BCAA). Catalyzes an alkyl-migration followed by a ketol-acid reduction of (S)-2-acetolactate (S2AL) to yield (R)-2,3-dihydroxy-isovalerate. In the isomerase reaction, S2AL is rearranged via a Mg-dependent methyl migration to produce 3-hydroxy-3-methyl-2-ketobutyrate (HMKB). In the reductase reaction, this 2-ketoacid undergoes a metal-dependent reduction by NADPH to yield (R)-2,3-dihydroxy-isovalerate. This is Ketol-acid reductoisomerase (NADP(+)) from Sinorhizobium medicae (strain WSM419) (Ensifer medicae).